The chain runs to 1134 residues: Mediator of RNA polymerase II transcription subunit 12 (1134 aa).

It belongs to the Mediator complex subunit 12 family. Component of the srb8-11 complex which consists of rb8, srb9(TRAP240), srb10 and srb11. The srb8-11 complex associates with the Mediator complex thereby blocking association with RNA polymerase II and leading to reduced transcriptional activation by Mediator.

It is found in the nucleus. In terms of biological role, component of the srb8-11 complex. The srb8-11 complex is a regulatory module of the Mediator complex which is itself involved in regulation of basal and activated RNA polymerase II-dependent transcription. The srb8-11 complex may be involved in the transcriptional repression of a subset of genes regulated by Mediator. It may inhibit the association of the Mediator complex with RNA polymerase II to form the holoenzyme complex. The chain is Mediator of RNA polymerase II transcription subunit 12 (srb8) from Schizosaccharomyces pombe (strain 972 / ATCC 24843) (Fission yeast).